A 598-amino-acid polypeptide reads, in one-letter code: MDDHNLEEFRRHWQEELAQSQALRRRRRLEAGERRSPRRPEAGARGEPASGYLGLAQGLLEGAGRPPAPRPGRGGDRKDTSSRSRSPPDRDATEPEPLVDQLIRDLNELDDVPFFDVRLPYELAINIFQYLNRRELGLCAQVSKTWKVIAEDEVLWYRLCRQEGHLPHSRFSDYTCWKLILQECLAKEHTLRANWKNRKGAVSELEHVPDAVLCDVRSHDGVVIAGYTSGDVRVWDTRTWDYVAPFLESESEEEDPGMQPYVSFVRINSSLAVAAYEDGILNIWDLRTGRFPIFRFEHDARIQALALSQEKPIVATASAFDVVMLYPNEEGHWHVASEFEVQKLVDYLEIVPNTGRYPVAIATAGDLVYLLKADDSARTLHYVYGQPATCLDVSASQVAFGVKSLGWVYEGNKILVYSLEAERCLSKLGNALGDFTCVNIRDSPPNLMVSGNMDRRVRIHDLRSDKIALSLSAHQLGVSAVQMDDWKVVSGGEEGLVSVWDYRMNQKLWEVHSRHPVRYLSFNSHSLITANVPYEKVLRNSDLDNFACHRRHRGLIHAYEFAVDQLAFQSPLPVCRLPRDIMAGYSYDLALSFPHDSI.

At Met-1 the chain carries N-acetylmethionine. The segment at 20–97 (SQALRRRRRL…PDRDATEPEP (78 aa)) is disordered. Positions 29-44 (LEAGERRSPRRPEAGA) are enriched in basic and acidic residues. Low complexity predominate over residues 51–65 (GYLGLAQGLLEGAGR). Residues 73 to 93 (RGGDRKDTSSRSRSPPDRDAT) are compositionally biased toward basic and acidic residues. A Phosphoserine modification is found at Ser-84. Ser-86 carries the post-translational modification Phosphoserine; by MTOR. The F-box domain occupies 113-159 (PFFDVRLPYELAINIFQYLNRRELGLCAQVSKTWKVIAEDEVLWYRL). WD repeat units follow at residues 201-250 (AVSE…LESE), 259-299 (QPYV…FEHD), 300-340 (ARIQ…SEFE), 341-383 (VQKL…LHYV), 384-429 (YGQP…SKLG), 430-475 (NALG…SAHQ), 476-513 (LGVS…EVHS), and 514-561 (RHPV…AYEF).

Component of the Cul7-RING(FBXW8) complex consisting of CUL7, RBX1, SKP1 and FBXW8; within the complex interacts with CUL7 and SKP1. Interacts with GLMN isoform 1. Interacts with OBSL1, CUL1, CUL2, CCT6B, PFDN5, CCT2, CCT3, CCT6A, CCT7, VBP1, CCDC8, ARF1, TRIP13, PDCD5 and GORASP1. Interacts with MAP4K1/HPK1 (when autophosphorylated). Associated component of the 3M complex. Interacts with POUF51 (when phosphorylated on 'Ser-347'). Post-translationally, phosphorylation at Ser-86 by mTORC2 promotes FBXW8 stabilization, allowing its translocation to the cytosol in response to insulin. Widely expressed. Expressed at higher level in skeletal muscle, cartilage and lung.

Its subcellular location is the cytoplasm. The protein localises to the perinuclear region. The protein resides in the golgi apparatus. It is found in the cytosol. It participates in protein modification; protein ubiquitination. In terms of biological role, substrate-recognition component of the Cul7-RING(FBXW8) ubiquitin ligase complex, which mediates the ubiquitination and subsequent proteasomal degradation of target proteins. The Cul7-RING(FBXW8) complex mediates ubiquitination and consequent degradation of GORASP1, acting as a component of the ubiquitin ligase pathway that regulates Golgi morphogenesis and dendrite patterning in brain. Mediates ubiquitination and degradation of IRS1 in a mTOR-dependent manner: the Cul7-RING(FBXW8) complex recognizes and binds IRS1 previously phosphorylated by S6 kinase (RPS6KB1 or RPS6KB2). The Cul7-RING(FBXW8) complex also mediates ubiquitination of MAP4K1/HPK1: recognizes and binds autophosphorylated MAP4K1/HPK1, leading to its degradation, thereby affecting cell proliferation and differentiation. The Cul7-RING(FBXW8) complex also mediates ubiquitination of phosphorylated cyclin-D1 (CCND1). The Cul7-RING(FBXW8) complex is however not a major regulator of CCND1 stability during the G1/S transition. Associated component of the 3M complex, suggesting that it mediates some of 3M complex functions. This is F-box/WD repeat-containing protein 8 (Fbxw8) from Mus musculus (Mouse).